We begin with the raw amino-acid sequence, 275 residues long: Large ribosomal subunit protein uL2 (275 aa).

Positions 222-275 (GKVMNPVDHPHGGGEGRNPIGRNPSTPWGKLAMGVKTRGNKKSDRLIVKRRNKK) are disordered.

This sequence belongs to the universal ribosomal protein uL2 family. Part of the 50S ribosomal subunit. Forms a bridge to the 30S subunit in the 70S ribosome.

Its function is as follows. One of the primary rRNA binding proteins. Required for association of the 30S and 50S subunits to form the 70S ribosome, for tRNA binding and peptide bond formation. It has been suggested to have peptidyltransferase activity; this is somewhat controversial. Makes several contacts with the 16S rRNA in the 70S ribosome. The polypeptide is Large ribosomal subunit protein uL2 (Desulforamulus reducens (strain ATCC BAA-1160 / DSM 100696 / MI-1) (Desulfotomaculum reducens)).